A 205-amino-acid chain; its full sequence is Ephrin-A1 (205 aa).

The signal sequence occupies residues 1-17; the sequence is MEFLWAPLLGLCCSLAA. In terms of domain architecture, Ephrin RBD spans 18-151; sequence ADRHIVFWNS…KLKVTVNGKI (134 aa). Asn-26 carries an N-linked (GlcNAc...) asparagine glycan. 2 disulfides stabilise this stretch: Cys-51-Cys-92 and Cys-80-Cys-140. The GPI-anchor amidated serine moiety is linked to residue Ser-182. Residues 183 to 205 constitute a propeptide, removed in mature form; that stretch reads AAPRLFPLVWAVLLLPLLLLQTQ.

Belongs to the ephrin family. Monomer. Homodimer. Forms heterodimers with EPHA2. Binds to the receptor tyrosine kinases EPHA2, EPHA3, EPHA4, EPHA5, EPHA6 and EPHA7. Also binds with low affinity to EPHA1. In terms of processing, undergoes proteolysis by a metalloprotease to give rise to a soluble monomeric form. Post-translationally, N-Glycosylation is required for binding to EPHA2 receptor and inducing its internalization.

Its subcellular location is the cell membrane. It is found in the secreted. Its function is as follows. Cell surface GPI-bound ligand for Eph receptors, a family of receptor tyrosine kinases which are crucial for migration, repulsion and adhesion during neuronal, vascular and epithelial development. Binds promiscuously Eph receptors residing on adjacent cells, leading to contact-dependent bidirectional signaling into neighboring cells. Plays an important role in angiogenesis and tumor neovascularization. The recruitment of VAV2, VAV3 and PI3-kinase p85 subunit by phosphorylated EPHA2 is critical for EFNA1-induced RAC1 GTPase activation and vascular endothelial cell migration and assembly. Exerts anti-oncogenic effects in tumor cells through activation and down-regulation of EPHA2. Activates EPHA2 by inducing tyrosine phosphorylation which leads to its internalization and degradation. Acts as a negative regulator in the tumorigenesis of gliomas by down-regulating EPHA2 and FAK. Can evoke collapse of embryonic neuronal growth cone and regulates dendritic spine morphogenesis. This chain is Ephrin-A1 (Efna1), found in Rattus norvegicus (Rat).